We begin with the raw amino-acid sequence, 351 residues long: Pentatricopeptide repeat-containing protein At3g56030, mitochondrial (351 aa).

A mitochondrion-targeting transit peptide spans 1–41; sequence MFRLKPLISVDLNQTMSLLRRFVKEANNSRFLLQSISGRSF. PPR repeat units lie at residues 124 to 158, 159 to 193, 194 to 224, and 232 to 266; these read RKHS…EFGL, STCV…AIPV, DVTS…MEEE, and DTRT…GLSV.

This sequence belongs to the PPR family. P subfamily.

It is found in the mitochondrion. This Arabidopsis thaliana (Mouse-ear cress) protein is Pentatricopeptide repeat-containing protein At3g56030, mitochondrial.